A 325-amino-acid chain; its full sequence is Transcription initiation factor IIB 2 (325 aa).

Positions 1-13 are enriched in polar residues; that stretch reads MSDSTIRTYSSDQ. Positions 1–29 are disordered; the sequence is MSDSTIRTYSSDQRQTDNDETVSTPDEDV. The segment at 28–58 adopts a TFIIB-type zinc-finger fold; that stretch reads DVLTCPECGGQVIDDEEHGESVCVDCGLVVE. The Zn(2+) site is built by Cys32, Cys35, Cys50, and Cys53. Residues 73 to 93 form a disordered region; that stretch reads STEKDEKSRVGAPTTNMMHDK. Repeat copies occupy residues 144-227 and 238-319.

It belongs to the TFIIB family.

Its function is as follows. Stabilizes TBP binding to an archaeal box-A promoter. Also responsible for recruiting RNA polymerase II to the pre-initiation complex (DNA-TBP-TFIIB). The polypeptide is Transcription initiation factor IIB 2 (Halobacterium salinarum (strain ATCC 700922 / JCM 11081 / NRC-1) (Halobacterium halobium)).